Reading from the N-terminus, the 453-residue chain is MYLIIKKTHKLPHWLQKVSLSIMLIIFLWKPALLADMHIEITCGVNAAHPIAVIPFTCVSNQYNKSISIEDIASIIAADLRNSSKFNTIPVEYLPHKPTKVSDVIPTFWEKLGINIIVLGTVHINYDESYIISYHLIDTSSNPALIISENQYSVEKKWLRYVAHAISNEIFEKLTGIKGAFCTRIAYVLRIHNDHYPYELYISDYDGHNQISICRSTEPLMSPAWSPDGKKIAYVTFASGHSELVIQALNTGLVNNIVSFPGHNGAPSFSPDCKKLAFSLSKTGSLNLYIMDLESGEITQLTKNRNNNTEPSWFPDNQNIAYTSDQGGSPQIYKINVKTTEIQRLSWLHTSNQNPNVSSDGTFIIMVNRHQGKQNIAKLNLLTGQEEILTDTLLADSPSIAPNNTMVLYSNINKDLTTKSNLELISIDGHFKAHIQGDQGDIRFPTWSPLHLE.

A signal peptide spans 1–34 (MYLIIKKTHKLPHWLQKVSLSIMLIIFLWKPALL).

Belongs to the TolB family. The Tol-Pal system is composed of five core proteins: the inner membrane proteins TolA, TolQ and TolR, the periplasmic protein TolB and the outer membrane protein Pal. They form a network linking the inner and outer membranes and the peptidoglycan layer.

The protein localises to the periplasm. In terms of biological role, part of the Tol-Pal system, which plays a role in outer membrane invagination during cell division and is important for maintaining outer membrane integrity. TolB occupies a key intermediary position in the Tol-Pal system because it communicates directly with both membrane-embedded components, Pal in the outer membrane and TolA in the inner membrane. This chain is Tol-Pal system protein TolB, found in Blochmanniella pennsylvanica (strain BPEN).